A 178-amino-acid polypeptide reads, in one-letter code: Nuclear transcription factor Y subunit B-2 (178 aa).

The DNA-binding element occupies 39 to 45; sequence LPIANIS. Positions 66 to 77 are subunit association domain (SAD); the sequence is LQECVSEFISFV. The disordered stretch occupies residues 131-156; sequence SSKAGDGSVKKDTIGPHSGASSSSAQ.

This sequence belongs to the NFYB/HAP3 subunit family. In terms of assembly, heterotrimeric transcription factor composed of three components, NF-YA, NF-YB and NF-YC. NF-YB and NF-YC must interact and dimerize for NF-YA association and DNA binding. Interacts with NFYC4 and NFYC6. As to expression, ubiquitous.

It is found in the nucleus. Component of the NF-Y/HAP transcription factor complex. The NF-Y complex stimulates the transcription of various genes by recognizing and binding to a CCAAT motif in promoters. May regulate the expression of photosynthetic genes, and may be involved in chloroplast and amyloplast development. The polypeptide is Nuclear transcription factor Y subunit B-2 (NFYB2) (Oryza sativa subsp. japonica (Rice)).